The primary structure comprises 170 residues: MDAKIGQFFDSVGTFFSGSDKIPWCDGDVIAGCEREVREATDSGTEDLKKECLMRLSWALVHSRQTEDVQRGIAMLEASLESSAPPLEDREKLYLLAVGYYRSGNYSRSRQLVDRCIEMQADWRQALVLKKTIEDKITKDGVIGIGITATAFGAVGLIAGGIVAAMSRKK.

A TPR repeat occupies 90–123 (REKLYLLAVGYYRSGNYSRSRQLVDRCIEMQADW). A helical transmembrane segment spans residues 142–162 (VIGIGITATAFGAVGLIAGGI).

The protein belongs to the FIS1 family. As to quaternary structure, interacts with ARC5.

Its subcellular location is the mitochondrion outer membrane. It is found in the peroxisome membrane. Component of the peroxisomal and mitochondrial division machineries. Plays a role in promoting the fission of mitochondria and peroxisomes. The chain is Mitochondrial fission 1 protein A (FIS1A) from Arabidopsis thaliana (Mouse-ear cress).